A 969-amino-acid polypeptide reads, in one-letter code: RNA polymerase-associated protein RapA (969 aa).

Residues 162–339 form the Helicase ATP-binding domain; that stretch reads EVGQRVAPRV…FARLALLDAD (178 aa). ATP is bound at residue 175–182; that stretch reads DEVGLGKT. The DEAH box motif lies at 285–288; that stretch reads DEAH. One can recognise a Helicase C-terminal domain in the interval 492-663; that stretch reads RIEWLITFLK…GFLKNPQAVG (172 aa).

It belongs to the SNF2/RAD54 helicase family. RapA subfamily. Interacts with the RNAP. Has a higher affinity for the core RNAP than for the holoenzyme. Its ATPase activity is stimulated by binding to RNAP.

Transcription regulator that activates transcription by stimulating RNA polymerase (RNAP) recycling in case of stress conditions such as supercoiled DNA or high salt concentrations. Probably acts by releasing the RNAP, when it is trapped or immobilized on tightly supercoiled DNA. Does not activate transcription on linear DNA. Probably not involved in DNA repair. This chain is RNA polymerase-associated protein RapA, found in Actinobacillus pleuropneumoniae serotype 5b (strain L20).